A 231-amino-acid chain; its full sequence is uncharacterized protein (231 aa).

Helical transmembrane passes span 26–46 (TYSW…LTAQ), 56–76 (SLRL…SMFA), 84–104 (AGAL…ALLF), 112–132 (ITAF…GFVI), 142–162 (FFLF…FVGS), 163–183 (SALS…LTAY), and 206–226 (INGA…LLNI).

This sequence belongs to the BI1 family.

The protein localises to the cell membrane. This is an uncharacterized protein from Deinococcus radiodurans (strain ATCC 13939 / DSM 20539 / JCM 16871 / CCUG 27074 / LMG 4051 / NBRC 15346 / NCIMB 9279 / VKM B-1422 / R1).